Consider the following 341-residue polypeptide: tRNA N6-adenosine threonylcarbamoyltransferase (341 aa).

Fe cation-binding residues include His-111 and His-115. Substrate-binding positions include 134–138 (LVSGG), Asp-167, Gly-180, and Asn-277. A Fe cation-binding site is contributed by Asp-305.

The protein belongs to the KAE1 / TsaD family. Fe(2+) serves as cofactor.

It is found in the cytoplasm. The catalysed reaction is L-threonylcarbamoyladenylate + adenosine(37) in tRNA = N(6)-L-threonylcarbamoyladenosine(37) in tRNA + AMP + H(+). Required for the formation of a threonylcarbamoyl group on adenosine at position 37 (t(6)A37) in tRNAs that read codons beginning with adenine. Is involved in the transfer of the threonylcarbamoyl moiety of threonylcarbamoyl-AMP (TC-AMP) to the N6 group of A37, together with TsaE and TsaB. TsaD likely plays a direct catalytic role in this reaction. This Chromobacterium violaceum (strain ATCC 12472 / DSM 30191 / JCM 1249 / CCUG 213 / NBRC 12614 / NCIMB 9131 / NCTC 9757 / MK) protein is tRNA N6-adenosine threonylcarbamoyltransferase.